The following is a 420-amino-acid chain: Alpha-ketoglutarate-dependent xanthine dioxygenase xan-1 (420 aa).

Fe cation is bound by residues histidine 157 and aspartate 159. Threonine 206 and tryptophan 336 together coordinate 2-oxoglutarate. Histidine 351 contacts Fe cation. Arginine 366 contributes to the 2-oxoglutarate binding site. A substrate-binding site is contributed by arginine 366.

It belongs to the TfdA dioxygenase family. Fe(2+) is required as a cofactor.

It localises to the cytoplasm. The protein resides in the cytosol. The catalysed reaction is xanthine + 2-oxoglutarate + O2 = urate + succinate + CO2. Functionally, alpha-ketoglutarate-dependent xanthine dioxygenase is a non-heme mononuclear Fe(2+) enzyme that decarboxylates alpha-ketoglutarate to succinate and CO(2) while hydroxylating xanthine to generate uric acid. Allows xanthine utilization as a nitrogen source. The chain is Alpha-ketoglutarate-dependent xanthine dioxygenase xan-1 from Neurospora crassa (strain ATCC 24698 / 74-OR23-1A / CBS 708.71 / DSM 1257 / FGSC 987).